A 335-amino-acid chain; its full sequence is Glycerol-3-phosphate dehydrogenase [NAD(P)+] (335 aa).

Positions 12, 13, and 107 each coordinate NADPH. K107, G138, and S140 together coordinate sn-glycerol 3-phosphate. Position 142 (A142) interacts with NADPH. K193, D246, S256, R257, and N258 together coordinate sn-glycerol 3-phosphate. K193 (proton acceptor) is an active-site residue. R257 lines the NADPH pocket. Residues V281 and E283 each contribute to the NADPH site.

It belongs to the NAD-dependent glycerol-3-phosphate dehydrogenase family.

The protein resides in the cytoplasm. The enzyme catalyses sn-glycerol 3-phosphate + NAD(+) = dihydroxyacetone phosphate + NADH + H(+). The catalysed reaction is sn-glycerol 3-phosphate + NADP(+) = dihydroxyacetone phosphate + NADPH + H(+). Its pathway is membrane lipid metabolism; glycerophospholipid metabolism. Its function is as follows. Catalyzes the reduction of the glycolytic intermediate dihydroxyacetone phosphate (DHAP) to sn-glycerol 3-phosphate (G3P), the key precursor for phospholipid synthesis. This Geobacter sulfurreducens (strain ATCC 51573 / DSM 12127 / PCA) protein is Glycerol-3-phosphate dehydrogenase [NAD(P)+].